We begin with the raw amino-acid sequence, 170 residues long: uncharacterized protein (170 aa).

Residues 7–27 (LVELLIGLAIISIALNFAVPL) traverse the membrane as a helical segment.

It localises to the membrane. This is an uncharacterized protein from Haemophilus influenzae (strain ATCC 51907 / DSM 11121 / KW20 / Rd).